We begin with the raw amino-acid sequence, 161 residues long: 2-C-methyl-D-erythritol 2,4-cyclodiphosphate synthase (161 aa).

Residues Asp-10 and His-12 each coordinate a divalent metal cation. 4-CDP-2-C-methyl-D-erythritol 2-phosphate is bound by residues 10-12 and 36-37; these read DVH and HS. Residue His-44 participates in a divalent metal cation binding. 4-CDP-2-C-methyl-D-erythritol 2-phosphate is bound by residues 58–60, 63–67, and Arg-144; these read DIG and FSDTD.

This sequence belongs to the IspF family. In terms of assembly, homotrimer. A divalent metal cation serves as cofactor.

The catalysed reaction is 4-CDP-2-C-methyl-D-erythritol 2-phosphate = 2-C-methyl-D-erythritol 2,4-cyclic diphosphate + CMP. Its pathway is isoprenoid biosynthesis; isopentenyl diphosphate biosynthesis via DXP pathway; isopentenyl diphosphate from 1-deoxy-D-xylulose 5-phosphate: step 4/6. In terms of biological role, involved in the biosynthesis of isopentenyl diphosphate (IPP) and dimethylallyl diphosphate (DMAPP), two major building blocks of isoprenoid compounds. Catalyzes the conversion of 4-diphosphocytidyl-2-C-methyl-D-erythritol 2-phosphate (CDP-ME2P) to 2-C-methyl-D-erythritol 2,4-cyclodiphosphate (ME-CPP) with a corresponding release of cytidine 5-monophosphate (CMP). This is 2-C-methyl-D-erythritol 2,4-cyclodiphosphate synthase from Burkholderia ambifaria (strain ATCC BAA-244 / DSM 16087 / CCUG 44356 / LMG 19182 / AMMD) (Burkholderia cepacia (strain AMMD)).